Consider the following 343-residue polypeptide: Aspartate carbamoyltransferase catalytic subunit (343 aa).

Carbamoyl phosphate contacts are provided by Arg-91 and Thr-92. Residue Lys-119 coordinates L-aspartate. Carbamoyl phosphate contacts are provided by Arg-141, His-171, and Gln-174. The L-aspartate site is built by Arg-204 and Arg-259. Carbamoyl phosphate-binding residues include Gly-300 and Pro-301.

It belongs to the aspartate/ornithine carbamoyltransferase superfamily. ATCase family. Heterododecamer (2C3:3R2) of six catalytic PyrB chains organized as two trimers (C3), and six regulatory PyrI chains organized as three dimers (R2).

It carries out the reaction carbamoyl phosphate + L-aspartate = N-carbamoyl-L-aspartate + phosphate + H(+). It participates in pyrimidine metabolism; UMP biosynthesis via de novo pathway; (S)-dihydroorotate from bicarbonate: step 2/3. Its function is as follows. Catalyzes the condensation of carbamoyl phosphate and aspartate to form carbamoyl aspartate and inorganic phosphate, the committed step in the de novo pyrimidine nucleotide biosynthesis pathway. This chain is Aspartate carbamoyltransferase catalytic subunit, found in Burkholderia vietnamiensis (strain G4 / LMG 22486) (Burkholderia cepacia (strain R1808)).